A 503-amino-acid polypeptide reads, in one-letter code: Glutamate--tRNA ligase (503 aa).

Residues 14–24 carry the 'HIGH' region motif; it reads PSPTGSLHIGG. The 'KMSKS' region motif lies at 261–265; that stretch reads KLSKR. Lys264 provides a ligand contact to ATP.

It belongs to the class-I aminoacyl-tRNA synthetase family. Glutamate--tRNA ligase type 1 subfamily. Monomer.

It is found in the cytoplasm. The enzyme catalyses tRNA(Glu) + L-glutamate + ATP = L-glutamyl-tRNA(Glu) + AMP + diphosphate. Functionally, catalyzes the attachment of glutamate to tRNA(Glu) in a two-step reaction: glutamate is first activated by ATP to form Glu-AMP and then transferred to the acceptor end of tRNA(Glu). The chain is Glutamate--tRNA ligase from Chloroflexus aurantiacus (strain ATCC 29366 / DSM 635 / J-10-fl).